We begin with the raw amino-acid sequence, 140 residues long: Calcium-binding protein B (140 aa).

2 consecutive EF-hand domains span residues 38–73 and 74–109; these read ATLS…INQP and KTYL…KTSS. 5 residues coordinate Ca(2+): Asp51, Asn53, Ser55, Asp57, and Glu62.

The chain is Calcium-binding protein B (cbpB) from Dictyostelium discoideum (Social amoeba).